The primary structure comprises 327 residues: Lactosylceramide 4-alpha-galactosyltransferase (327 aa).

The DXD motif signature appears at 166-168; it reads DTD.

This sequence belongs to the glycosyltransferase 32 family.

It localises to the golgi apparatus membrane. The enzyme catalyses a beta-D-Gal-(1-&gt;4)-beta-D-Glc-(1&lt;-&gt;1)-Cer(d18:1(4E)) + UDP-alpha-D-galactose = a globoside Gb3Cer (d18:1(4E)) + UDP + H(+). It carries out the reaction a beta-D-Gal-(1&lt;-&gt;1')-ceramide + UDP-alpha-D-galactose = alpha-D-Gal-(1-&gt;4)-beta-D-Gal-(1&lt;-&gt;1')-Cer + UDP + H(+). It participates in glycolipid biosynthesis. Catalyzes the transfer of galactose from UDP-alpha-D-galactose to lactosylceramide/beta-D-galactosyl-(1-&gt;4)-beta-D-glucosyl-(1&lt;-&gt;1)-ceramide(d18:1(4E)) to produce globotriaosylceramide/globoside Gb3Cer (d18:1(4E)). Also able to transfer galactose to galactosylceramide/beta-D-Gal-(1&lt;-&gt;1')-Cer. Globoside Gb3Cer is a glycosphingolipid of the globo serie, one of the major types of neutral root structures of glycosphingolipids, that constitute a significant portion of mammalian cell membranes. In Gorilla gorilla gorilla (Western lowland gorilla), this protein is Lactosylceramide 4-alpha-galactosyltransferase (A4GALT).